We begin with the raw amino-acid sequence, 357 residues long: Enoyl-[acyl-carrier-protein] reductase, mitochondrial (357 aa).

The transit peptide at 1–19 directs the protein to the mitochondrion; it reads MLRRGFLSRINAAQWSRQM. The region spanning 36-352 is the Enoyl reductase (ER) domain; that stretch reads EVLQLVEDKL…FKGFTGKKYI (317 aa). Catalysis depends on tyrosine 74, which acts as the Proton donor. NADP(+) is bound by residues asparagine 147, 173–176, 196–198, 264–267, 289–291, lysine 349, and lysine 350; these read NSAV, RDR, YGGM, and FWM.

Belongs to the zinc-containing alcohol dehydrogenase family. Quinone oxidoreductase subfamily. As to quaternary structure, homodimer. In terms of tissue distribution, expressed in the central nervous system.

It is found in the mitochondrion. The catalysed reaction is a 2,3-saturated acyl-[ACP] + NADP(+) = a (2E)-enoyl-[ACP] + NADPH + H(+). Catalyzes the NADPH-dependent reduction of trans-2-enoyl thioesters in mitochondrial fatty acid synthesis (fatty acid synthesis type II). Fatty acid chain elongation in mitochondria uses acyl carrier protein (ACP) as an acyl group carrier, but the enzyme accepts both ACP and CoA thioesters as substrates in vitro. Involved in iron homeostasis; affecting Fe-S cluster assembly and ceramide metabolism. Required for proper morphology and bioenergetic functions of mitochondria. Required for maintenance of neurons, including photoreceptor neurons. The chain is Enoyl-[acyl-carrier-protein] reductase, mitochondrial from Drosophila melanogaster (Fruit fly).